Reading from the N-terminus, the 626-residue chain is Janus kinase and microtubule-interacting protein 1 (626 aa).

Residues Met1–Ala22 form a disordered region. The mediates association with microtubules stretch occupies residues Met1–Val365. Coiled coils occupy residues Val19 to Arg255 and Glu284 to Ser413. A mediates interaction with TYK2 and GABBR1 region spans residues Val365 to Met626. Ser382 carries the post-translational modification Phosphoserine. Residues Glu452 to Thr461 show a composition bias toward polar residues. Positions Glu452–Asp477 are disordered. At Thr470 the chain carries Phosphothreonine. The stretch at Gln490–Arg604 forms a coiled coil.

The protein belongs to the JAKMIP family. In terms of assembly, homodimer. Forms a complex with GABBR1 and KIF5B/kinesin-1. Interacts with JAK1 and TYK2. Predominantly expressed in neural tissues and lymphoid cells (at protein level). Isoform 2, isoform 3 and isoform 4 are specifically expressed in brain and retina. Isoform 1 and isoform 5 are also detected in liver, lung and skeletal muscle. Also detected in testis and to a lower extent spleen and intestine.

It is found in the cytoplasm. The protein resides in the cytoskeleton. The protein localises to the membrane. In terms of biological role, associates with microtubules and may play a role in the microtubule-dependent transport of the GABA-B receptor. May play a role in JAK1 signaling and regulate microtubule cytoskeleton rearrangements. The protein is Janus kinase and microtubule-interacting protein 1 (JAKMIP1) of Homo sapiens (Human).